A 31-amino-acid polypeptide reads, in one-letter code: Cytochrome b6-f complex subunit 6 (31 aa).

The helical transmembrane segment at 4-24 (ITSYFGFLLAALTITSALFIG) threads the bilayer.

This sequence belongs to the PetL family. In terms of assembly, the 4 large subunits of the cytochrome b6-f complex are cytochrome b6, subunit IV (17 kDa polypeptide, PetD), cytochrome f and the Rieske protein, while the 4 small subunits are PetG, PetL, PetM and PetN. The complex functions as a dimer.

The protein resides in the plastid. It is found in the chloroplast thylakoid membrane. Its function is as follows. Component of the cytochrome b6-f complex, which mediates electron transfer between photosystem II (PSII) and photosystem I (PSI), cyclic electron flow around PSI, and state transitions. PetL is important for photoautotrophic growth as well as for electron transfer efficiency and stability of the cytochrome b6-f complex. This Humulus lupulus (European hop) protein is Cytochrome b6-f complex subunit 6.